The chain runs to 203 residues: Probable chemoreceptor glutamine deamidase CheD (203 aa).

Belongs to the CheD family.

It catalyses the reaction L-glutaminyl-[protein] + H2O = L-glutamyl-[protein] + NH4(+). In terms of biological role, probably deamidates glutamine residues to glutamate on methyl-accepting chemotaxis receptors (MCPs), playing an important role in chemotaxis. The protein is Probable chemoreceptor glutamine deamidase CheD of Janthinobacterium sp. (strain Marseille) (Minibacterium massiliensis).